An 86-amino-acid polypeptide reads, in one-letter code: Large ribosomal subunit protein bL35m (86 aa).

The N-terminal 18 residues, 1–18 (MLVVFQRVVRATVLVGRK), are a transit peptide targeting the mitochondrion. The disordered stretch occupies residues 45–69 (RKHAGAQHLNRDTSSSTRARQRQWE).

This sequence belongs to the bacterial ribosomal protein bL35 family. As to quaternary structure, component of the mitochondrial large ribosomal subunit (mt-LSU). Mature yeast 74S mitochondrial ribosomes consist of a small (37S) and a large (54S) subunit. The 37S small subunit contains a 15S ribosomal RNA (15S mt-rRNA) and at least 32 different proteins. The 54S large subunit contains a 21S rRNA (21S mt-rRNA) and at least 45 different proteins.

It is found in the mitochondrion. In terms of biological role, component of the mitochondrial ribosome (mitoribosome), a dedicated translation machinery responsible for the synthesis of mitochondrial genome-encoded proteins, including at least some of the essential transmembrane subunits of the mitochondrial respiratory chain. The mitoribosomes are attached to the mitochondrial inner membrane and translation products are cotranslationally integrated into the membrane. This is Large ribosomal subunit protein bL35m (new15) from Schizosaccharomyces pombe (strain 972 / ATCC 24843) (Fission yeast).